The chain runs to 241 residues: Methylosome subunit pICln (241 aa).

The tract at residues 88-112 is disordered; it reads EDKEAHMADQEEEESEDDDDDEEPI. A compositionally biased stretch (acidic residues) spans 97–112; that stretch reads QEEEESEDDDDDEEPI.

It belongs to the pICln (TC 1.A.47) family. In terms of assembly, component of the methylosome, a 20S complex containing at least clns1a/picln, prmt5/skb1 and wdr77/mep50; may mediate snrpd1 and snrpd3 methylation. Forms a 6S pICln-Sm complex composed of clns1a/picln, snrpd1, snrpd2, snrpe, snrpf and snrpg; ring-like structure where clns1a/pICln mimics additional Sm proteins and which is unable to assemble into the core snRNP.

The protein resides in the cytoplasm. It is found in the cytosol. The protein localises to the nucleus. It localises to the cytoskeleton. Functionally, involved in both the assembly of spliceosomal snRNPs and the methylation of Sm proteins. Chaperone that regulates the assembly of spliceosomal U1, U2, U4 and U5 small nuclear ribonucleoproteins (snRNPs), the building blocks of the spliceosome, and thereby plays an important role in the splicing of cellular pre-mRNAs. Most spliceosomal snRNPs contain a common set of Sm proteins SNRPB, SNRPD1, SNRPD2, SNRPD3, SNRPE, SNRPF and SNRPG that assemble in a heptameric protein ring on the Sm site of the small nuclear RNA to form the core snRNP (Sm core). In the cytosol, the Sm proteins SNRPD1, SNRPD2, SNRPE, SNRPF and SNRPG are trapped in an inactive 6S pICln-Sm complex by the chaperone CLNS1A that controls the assembly of the core snRNP. Dissociation by the SMN complex of CLNS1A from the trapped Sm proteins and their transfer to an SMN-Sm complex triggers the assembly of core snRNPs and their transport to the nucleus. In Xenopus laevis (African clawed frog), this protein is Methylosome subunit pICln (clns1a).